A 642-amino-acid chain; its full sequence is A-kinase anchor protein 8-like (642 aa).

Residues 1–269 (MSYTGFVQGS…MRRTWKTWTT (269 aa)) are sufficient for activation of CTE-mediated expression. The residue at position 209 (arginine 209) is an Asymmetric dimethylarginine; alternate. Position 209 is an omega-N-methylarginine; alternate (arginine 209). Omega-N-methylarginine occurs at positions 218, 238, and 248. Lysine 258 carries the post-translational modification N6-acetyllysine. The interval 265–382 (KTWTTADFRT…QDKQKKRQRD (118 aa)) is disordered. Threonine 268 carries the phosphothreonine modification. The Nuclear localization signal signature appears at 275–280 (KKKKRK). The Nuclear export signal (NES) signature appears at 281–297 (QGGSPDEPDSKATRTDC). Serine 284 bears the Phosphoserine mark. Basic and acidic residues predominate over residues 288-297 (PDSKATRTDC). Threonine 293 bears the Phosphothreonine mark. Serine 298 is subject to Phosphoserine. The span at 299 to 315 (DNSDSDNDEGTEGEAAE) shows a compositional bias: acidic residues. Positions 338 to 350 (EDGREEGKEDPEK) are enriched in basic and acidic residues. Residues 363 to 365 (KRK) carry the Nuclear localization signal motif. 2 consecutive C2H2 AKAP95-type zinc fingers follow at residues 392–414 (CSLC…SKFH) and 485–508 (CAAC…TMDH). The interval 546 to 642 (GENPFTDNPE…EDDEEGGGGP (97 aa)) is disordered. Over residues 553–564 (NPEEEKEQDEVE) the composition is skewed to acidic residues. Over residues 585-605 (AQPPVPLEPAPGTTTPPPPPP) the composition is skewed to pro residues. Residues 631-642 (DMEDDEEGGGGP) are compositionally biased toward acidic residues.

This sequence belongs to the AKAP95 family. As to quaternary structure, interacts (via N-terminus) with DHX9 (via RGG region). Interacts with TMPO isoform Beta, PRPF40A, RNF43, lamin-B. Interacts with HDAC3; increased during mitosis. Post-translationally, phosphorylated on serine or threonine residues possibly by PKA.

Its subcellular location is the nucleus. The protein resides in the nucleus matrix. It is found in the nucleus speckle. It localises to the PML body. The protein localises to the cytoplasm. In terms of biological role, could play a role in constitutive transport element (CTE)-mediated gene expression by association with DHX9. Increases CTE-dependent nuclear unspliced mRNA export. Proposed to target PRKACA to the nucleus but does not seem to be implicated in the binding of regulatory subunit II of PKA. May be involved in nuclear envelope breakdown and chromatin condensation. May be involved in anchoring nuclear membranes to chromatin in interphase and in releasing membranes from chromating at mitosis. May regulate the initiation phase of DNA replication when associated with TMPO isoform Beta. Required for cell cycle G2/M transition and histone deacetylation during mitosis. In mitotic cells recruits HDAC3 to the vicinity of chromatin leading to deacetylation and subsequent phosphorylation at 'Ser-10' of histone H3; in this function seems to act redundantly with AKAP8. May be involved in regulation of pre-mRNA splicing. The polypeptide is A-kinase anchor protein 8-like (Akap8l) (Mus musculus (Mouse)).